A 301-amino-acid polypeptide reads, in one-letter code: tRNA dimethylallyltransferase (301 aa).

An ATP-binding site is contributed by 8-15 (GATGTGKS). 10-15 (TGTGKS) contacts substrate. Positions 33–36 (DSMQ) are interaction with substrate tRNA.

This sequence belongs to the IPP transferase family. As to quaternary structure, monomer. Mg(2+) serves as cofactor.

It catalyses the reaction adenosine(37) in tRNA + dimethylallyl diphosphate = N(6)-dimethylallyladenosine(37) in tRNA + diphosphate. Its function is as follows. Catalyzes the transfer of a dimethylallyl group onto the adenine at position 37 in tRNAs that read codons beginning with uridine, leading to the formation of N6-(dimethylallyl)adenosine (i(6)A). This chain is tRNA dimethylallyltransferase, found in Tropheryma whipplei (strain Twist) (Whipple's bacillus).